Here is a 380-residue protein sequence, read N- to C-terminus: Queuine tRNA-ribosyltransferase (380 aa).

The active-site Proton acceptor is the D96. Substrate-binding positions include 96-100 (DSGGF), D150, Q193, and G220. The tract at residues 251–257 (GVGAPDS) is RNA binding. D270 serves as the catalytic Nucleophile. Residues 275 to 279 (TRIAR) form an RNA binding; important for wobble base 34 recognition region. Positions 308, 310, 313, and 339 each coordinate Zn(2+).

Belongs to the queuine tRNA-ribosyltransferase family. Homodimer. Within each dimer, one monomer is responsible for RNA recognition and catalysis, while the other monomer binds to the replacement base PreQ1. Zn(2+) serves as cofactor.

It carries out the reaction 7-aminomethyl-7-carbaguanine + guanosine(34) in tRNA = 7-aminomethyl-7-carbaguanosine(34) in tRNA + guanine. Its pathway is tRNA modification; tRNA-queuosine biosynthesis. Its function is as follows. Catalyzes the base-exchange of a guanine (G) residue with the queuine precursor 7-aminomethyl-7-deazaguanine (PreQ1) at position 34 (anticodon wobble position) in tRNAs with GU(N) anticodons (tRNA-Asp, -Asn, -His and -Tyr). Catalysis occurs through a double-displacement mechanism. The nucleophile active site attacks the C1' of nucleotide 34 to detach the guanine base from the RNA, forming a covalent enzyme-RNA intermediate. The proton acceptor active site deprotonates the incoming PreQ1, allowing a nucleophilic attack on the C1' of the ribose to form the product. After dissociation, two additional enzymatic reactions on the tRNA convert PreQ1 to queuine (Q), resulting in the hypermodified nucleoside queuosine (7-(((4,5-cis-dihydroxy-2-cyclopenten-1-yl)amino)methyl)-7-deazaguanosine). The protein is Queuine tRNA-ribosyltransferase of Streptococcus thermophilus (strain ATCC BAA-491 / LMD-9).